The sequence spans 495 residues: Cobyric acid synthase (495 aa).

The GATase cobBQ-type domain occupies 249–442; that stretch reads KFIVKVPVVT…LHGVFDEPEA (194 aa). Residue Cys-330 is the Nucleophile of the active site. His-434 is a catalytic residue.

Belongs to the CobB/CobQ family. CobQ subfamily.

The protein operates within cofactor biosynthesis; adenosylcobalamin biosynthesis. Catalyzes amidations at positions B, D, E, and G on adenosylcobyrinic A,C-diamide. NH(2) groups are provided by glutamine, and one molecule of ATP is hydrogenolyzed for each amidation. The chain is Cobyric acid synthase from Aliivibrio fischeri (strain ATCC 700601 / ES114) (Vibrio fischeri).